The primary structure comprises 111 residues: RNA polymerase-binding protein RbpA (111 aa).

It belongs to the RNA polymerase-binding protein RbpA family. As to quaternary structure, forms a complex with the RNAP catalytic core and with free principal sigma factors.

In terms of biological role, binds to RNA polymerase (RNAP), stimulating transcription from principal, but not alternative sigma factor promoters. The polypeptide is RNA polymerase-binding protein RbpA (Mycobacterium tuberculosis (strain CDC 1551 / Oshkosh)).